The primary structure comprises 268 residues: MPRSFLVKKHFNASKKPNYSELDTHTVIISPYLYESYSMPVIPQPEILSSGAYSPITVWTTAAPFHAQLPNGLSPLSGYSSSLGRVSPPPPSDTSSKDHSGSESPISDEEERLQSKLSDPHAIEAEKFQCNLCNKTYSTFSGLAKHKQLHCDAQSRKSFSCKYCDKEYVSLGALKMHIRTHTLPCVCKICGKAFSRPWLLQGHIRTHTGEKPFSCPHCNRAFADRSNLRAHLQTHSDVKKYQCKNCSKTFSRMSLLHKHEESGCCVAH.

Residues 1–20 (MPRSFLVKKHFNASKKPNYS) are SNAG domain. A disordered region spans residues 80 to 117 (SSSLGRVSPPPPSDTSSKDHSGSESPISDEEERLQSKL). C2H2-type zinc fingers lie at residues 128–150 (FQCNLCNKTYSTFSGLAKHKQLH), 159–181 (FSCKYCDKEYVSLGALKMHIRTH), 185–207 (CVCKICGKAFSRPWLLQGHIRTH), and 213–235 (FSCPHCNRAFADRSNLRAHLQTH). The segment at 241 to 264 (YQCKNCSKTFSRMSLLHKHEESGC) adopts a C2H2-type 5; atypical zinc-finger fold.

The protein belongs to the snail C2H2-type zinc-finger protein family. As to quaternary structure, interacts (via SNAG domain) with LIMD1 (via LIM domains), WTIP (via LIM domains) and AJUBA (via LIM domains). Interacts (via zinc fingers) with KPNA2, KPNB1, and TNPO1. May interact (via zinc fingers) with IPO7. Post-translationally, phosphorylated by GSK3B. Once phosphorylated, it becomes a target for ubiquitination. Ubiquitinated by the SCF(FBXO11) complex; ubiquitination requires previous GSK3B-mediated SNAI2 phosphorylation. In terms of tissue distribution, expressed in most adult human tissues, including spleen, thymus, prostate, testis, ovary, small intestine, colon, heart, brain, placenta, lung, liver, skeletal muscle, kidney and pancreas. Not detected in peripheral blood leukocyte. Expressed in the dermis and in all layers of the epidermis, with high levels of expression in the basal layers (at protein level). Expressed in osteoblasts (at protein level). Expressed in mesenchymal stem cells (at protein level). Expressed in breast tumor cells (at protein level).

The protein resides in the nucleus. It is found in the cytoplasm. In terms of biological role, transcriptional repressor that modulates both activator-dependent and basal transcription. Involved in the generation and migration of neural crest cells. Plays a role in mediating RAF1-induced transcriptional repression of the TJ protein, occludin (OCLN) and subsequent oncogenic transformation of epithelial cells. Represses BRCA2 expression by binding to its E2-box-containing silencer and recruiting CTBP1 and HDAC1 in breast cells. In epidermal keratinocytes, binds to the E-box in ITGA3 promoter and represses its transcription. Involved in the regulation of ITGB1 and ITGB4 expression and cell adhesion and proliferation in epidermal keratinocytes. Binds to E-box2 domain of BSG and activates its expression during TGFB1-induced epithelial-mesenchymal transition (EMT) in hepatocytes. Represses E-Cadherin/CDH1 transcription via E-box elements. Involved in osteoblast maturation. Binds to RUNX2 and SOC9 promoters and may act as a positive and negative transcription regulator, respectively, in osteoblasts. Binds to CXCL12 promoter via E-box regions in mesenchymal stem cells and osteoblasts. Plays an essential role in TWIST1-induced EMT and its ability to promote invasion and metastasis. In Homo sapiens (Human), this protein is Zinc finger protein SNAI2 (SNAI2).